A 500-amino-acid chain; its full sequence is MNYFPWLTIIVILPIFAGSLIFFLPHRGNRVIRWYTIFICIFELLLTAYTFCYHFQTDDPLIQLMEDYKWIQLFDFHWRLGIDGLSIGPILLTGFITTLATLAAWPVTRDSRLFNFLMLAMYSAQIGLFSSRDLLLFFIMWELELIPVYLLLSMWGGKKRLYSATKFILYTAGGSIFLLMGVLGIGLYGSNEPTLNFETSANQSYPLPLEIIFYIGFFIAFAVKLPIIPLHTWLPDTHGEAHYSTCMLLAGILLKMGAYGLVRINMELLSHAHSIFSPWLLIVGTIQIIYAASTSLGQRNLKKRIAYSSVSHMGFIIIGIGSITDTGLNGALLQIISHGFIGAALFFLAGTTYDRIRLVYLDEMGGIAILMPKIFTIFSTFSMASLALPGMSGFVAELIVFFGIITSQKYLLMPKILITFVMAIGMILTPIYSLSMSRQMFYGYKFFNIPNSYFFDSGPRELFLSISLFLPVLGIGMYPDFIFSLSVDKVEVILSNSFSK.

Helical transmembrane passes span 4 to 24 (FPWLTIIVILPIFAGSLIFFL), 35 to 55 (YTIFICIFELLLTAYTFCYHF), 87 to 107 (IGPILLTGFITTLATLAAWPV), 113 to 130 (LFNFLMLAMYSAQIGLFS), 134 to 154 (LLLFFIMWELELIPVYLLLSM), 167 to 187 (FILYTAGGSIFLLMGVLGIGL), 211 to 231 (IIFYIGFFIAFAVKLPIIPLH), 242 to 262 (HYSTCMLLAGILLKMGAYGLV), 272 to 292 (AHSIFSPWLLIVGTIQIIYAA), 305 to 325 (IAYSSVSHMGFIIIGIGSITD), 330 to 350 (GALLQIISHGFIGAALFFLAG), 364 to 384 (MGGIAILMPKIFTIFSTFSMA), 386 to 406 (LALPGMSGFVAELIVFFGIIT), 416 to 436 (ILITFVMAIGMILTPIYSLSM), and 463 to 483 (FLSISLFLPVLGIGMYPDFIF).

It belongs to the complex I subunit 4 family.

It localises to the plastid. Its subcellular location is the chloroplast thylakoid membrane. It carries out the reaction a plastoquinone + NADH + (n+1) H(+)(in) = a plastoquinol + NAD(+) + n H(+)(out). It catalyses the reaction a plastoquinone + NADPH + (n+1) H(+)(in) = a plastoquinol + NADP(+) + n H(+)(out). This Coffea arabica (Arabian coffee) protein is NAD(P)H-quinone oxidoreductase chain 4, chloroplastic.